We begin with the raw amino-acid sequence, 333 residues long: GTPase Obg (333 aa).

The Obg domain maps to 4–162; it reads GNFVDYVKIY…MDVILELKVL (159 aa). The OBG-type G domain maps to 163 to 332; the sequence is ADVGLVGFPN…LKDKLWKMLN (170 aa). Residues 169-176, 194-198, 216-219, 283-286, and 313-315 contribute to the GTP site; these read GFPNAGKS, FTTLK, DIPG, SKCD, and SSV. The Mg(2+) site is built by Ser-176 and Thr-196.

Belongs to the TRAFAC class OBG-HflX-like GTPase superfamily. OBG GTPase family. In terms of assembly, monomer. Requires Mg(2+) as cofactor.

The protein localises to the cytoplasm. In terms of biological role, an essential GTPase which binds GTP, GDP and possibly (p)ppGpp with moderate affinity, with high nucleotide exchange rates and a fairly low GTP hydrolysis rate. Plays a role in control of the cell cycle, stress response, ribosome biogenesis and in those bacteria that undergo differentiation, in morphogenesis control. The chain is GTPase Obg from Flavobacterium johnsoniae (strain ATCC 17061 / DSM 2064 / JCM 8514 / BCRC 14874 / CCUG 350202 / NBRC 14942 / NCIMB 11054 / UW101) (Cytophaga johnsonae).